The following is a 274-amino-acid chain: MQQLQNVIESAFERRADITPANVDTVTREAVNQVISLLDSGALRVAEKIDGQWVTHQWLKKAVLLSFRINDNQVIDGAESRYFDKVPMKFADYDEARFVKEGFRVVPPAAVRQGAFIARNTVLMPSYVNIGAYVDEGSMVDTWATVGSCAQIGKNVHLSGGVGIGGVLEPLQANPTIIEDNCFIGARSEVVEGVIVEEGSVISMGVYIGQSTRIYDRETGEVHYGRVPAGSVVVSGNLPSKDGKYSLYCAVIVKKVDAKTRSKVGINELLRTID.

2 residues coordinate substrate: R104 and D141.

It belongs to the transferase hexapeptide repeat family. As to quaternary structure, homotrimer.

Its subcellular location is the cytoplasm. The catalysed reaction is (S)-2,3,4,5-tetrahydrodipicolinate + succinyl-CoA + H2O = (S)-2-succinylamino-6-oxoheptanedioate + CoA. It participates in amino-acid biosynthesis; L-lysine biosynthesis via DAP pathway; LL-2,6-diaminopimelate from (S)-tetrahydrodipicolinate (succinylase route): step 1/3. The chain is 2,3,4,5-tetrahydropyridine-2,6-dicarboxylate N-succinyltransferase from Enterobacter sp. (strain 638).